The sequence spans 112 residues: MAVRIRLAKFGRKHHPIYRIVVMDAKSPREGKYIDILGTYDPKRKVLINVYPEKVKEWVLKGVELSHRAKAILWNHGILKEVVPEGYEMKRVGDYYVFEKRESKKSKGGEAA.

This sequence belongs to the bacterial ribosomal protein bS16 family.

The protein is Small ribosomal subunit protein bS16 of Aquifex aeolicus (strain VF5).